Here is a 375-residue protein sequence, read N- to C-terminus: Growth/differentiation factor 8 (375 aa).

The first 23 residues, 1 to 23 (MQKLAVYVYIYLFVQISVDPVAL), serve as a signal peptide directing secretion. Positions 24-266 (DGSSQPTENT…VTDTPKRSRR (243 aa)) are excised as a propeptide. A glycan (N-linked (GlcNAc...) asparagine) is linked at Asn-71. Disulfide bonds link Cys-272–Cys-282, Cys-281–Cys-340, Cys-309–Cys-372, and Cys-313–Cys-374.

This sequence belongs to the TGF-beta family. In terms of assembly, homodimer; disulfide-linked.

It is found in the secreted. In terms of biological role, acts specifically as a negative regulator of skeletal muscle growth. The polypeptide is Growth/differentiation factor 8 (MSTN) (Excalfactoria chinensis (Blue-breasted quail)).